The following is a 318-amino-acid chain: Olfactory receptor 13C9 (318 aa).

At 1–25 the chain is on the extracellular side; sequence MEWENQTILVEFFLKGHSVHPRLEL. N-linked (GlcNAc...) asparagine glycosylation is present at Asn5. The helical transmembrane segment at 26 to 46 threads the bilayer; it reads LFFVLIFIMYVVILLGNGTLI. Over 47-54 the chain is Cytoplasmic; that stretch reads LISILDPH. Residues 55–75 form a helical membrane-spanning segment; sequence LHTPMYFFLGNLSFLDICYTT. Residues 76 to 99 are Extracellular-facing; it reads TSIPSTLVSFLSERKTISFSGCAV. An intrachain disulfide couples Cys97 to Cys189. Residues 100 to 120 traverse the membrane as a helical segment; it reads QMFLGLAMGTTECVLLGMMAF. The Cytoplasmic segment spans residues 121–139; it reads DRYVAICNPLRYPIIMSKN. Residues 140-160 form a helical membrane-spanning segment; it reads AYVPMAVGSWFAGIVNSAVQT. The Extracellular segment spans residues 161 to 197; it reads TFVVQLPFCRKNVINHFSCEILAVMKLACADISGNEF. Residues 198–217 traverse the membrane as a helical segment; the sequence is LMLVATILFTLMPLLLIVIS. Residues 218–237 lie on the Cytoplasmic side of the membrane; it reads YSLIISSILKIHSSEGRSKA. A helical membrane pass occupies residues 238-258; the sequence is FSTCSAHLTVVIIFYGTILFM. The Extracellular portion of the chain corresponds to 259–277; that stretch reads YMKPKSKETLNSDDLDATD. The helical transmembrane segment at 278–298 threads the bilayer; sequence KIISMFYGVMTPMMNPLIYSL. The Cytoplasmic portion of the chain corresponds to 299–318; the sequence is RNKDVKEAVKHLPNRRFFSK.

The protein belongs to the G-protein coupled receptor 1 family.

Its subcellular location is the cell membrane. In terms of biological role, odorant receptor. This chain is Olfactory receptor 13C9 (OR13C9), found in Homo sapiens (Human).